Reading from the N-terminus, the 85-residue chain is UPF0512 protein R (85 aa).

Belongs to the UPF0512 family.

This chain is UPF0512 protein R, found in Dictyostelium discoideum (Social amoeba).